Reading from the N-terminus, the 205-residue chain is Regulator of G-protein signaling 4 (205 aa).

3 S-palmitoyl cysteine lipidation sites follow: cysteine 2, cysteine 12, and cysteine 95. Residues 62–178 (SLENLINHEC…LKSRFYLDLT (117 aa)) enclose the RGS domain.

Post-translationally, either Cys-2 or Cys-12 or both are palmitoylated. Phosphorylated by cyclic GMP-dependent protein kinase.

Functionally, inhibits signal transduction by increasing the GTPase activity of G protein alpha subunits thereby driving them into their inactive GDP-bound form. Activity on G(z)-alpha is inhibited by phosphorylation of the G-protein. Activity on G(z)-alpha and G(i)-alpha-1 is inhibited by palmitoylation of the G-protein. This Rattus norvegicus (Rat) protein is Regulator of G-protein signaling 4 (Rgs4).